A 532-amino-acid polypeptide reads, in one-letter code: Invertase 1 (532 aa).

Positions 1–19 are cleaved as a signal peptide; sequence MLLQAFLFLLAGFAAKISA. Residue Asn23 is glycosylated (N-linked (GlcNAc...) asparagine). Substrate-binding positions include 39 to 42 and Gln60; that span reads WMND. Residue Asp42 is part of the active site. N-linked (GlcNAc...) asparagine glycosylation is present at Asn64. 102–103 provides a ligand contact to substrate; sequence YS. N-linked (GlcNAc...) asparagine glycans are attached at residues Asn111, Asn112, Asn118, and Asn165. Substrate-binding positions include 170–171 and Glu223; that span reads RD. Asn275 carries an N-linked (GlcNAc...) asparagine glycan. Substrate is bound at residue Trp311. N-linked (GlcNAc...) asparagine glycans are attached at residues Asn356, Asn369, Asn384, Asn398, and Asn512.

This sequence belongs to the glycosyl hydrolase 32 family. In terms of processing, isoform Secreted is glycosylated. Isoform Intracellular is not glycosylated.

It is found in the cytoplasm. The protein localises to the secreted. It catalyses the reaction Hydrolysis of terminal non-reducing beta-D-fructofuranoside residues in beta-D-fructofuranosides.. This is Invertase 1 (SUC1) from Saccharomyces cerevisiae (Baker's yeast).